The sequence spans 255 residues: NAD kinase (255 aa).

Aspartate 44 functions as the Proton acceptor in the catalytic mechanism. NAD(+) is bound by residues aspartate 44 to glycine 45, histidine 49, asparagine 114 to glutamate 115, aspartate 144, alanine 152, serine 155 to serine 160, and glutamine 216.

Belongs to the NAD kinase family. A divalent metal cation is required as a cofactor.

It localises to the cytoplasm. The catalysed reaction is NAD(+) + ATP = ADP + NADP(+) + H(+). In terms of biological role, involved in the regulation of the intracellular balance of NAD and NADP, and is a key enzyme in the biosynthesis of NADP. Catalyzes specifically the phosphorylation on 2'-hydroxyl of the adenosine moiety of NAD to yield NADP. The polypeptide is NAD kinase (Rickettsia prowazekii (strain Madrid E)).